Consider the following 142-residue polypeptide: Nucleoside diphosphate kinase (142 aa).

Residues Lys-11, Phe-59, Arg-87, Thr-93, Arg-104, and Asn-114 each coordinate ATP. The active-site Pros-phosphohistidine intermediate is the His-117.

Belongs to the NDK family. As to quaternary structure, homotetramer. Mg(2+) is required as a cofactor.

The protein localises to the cytoplasm. The enzyme catalyses a 2'-deoxyribonucleoside 5'-diphosphate + ATP = a 2'-deoxyribonucleoside 5'-triphosphate + ADP. The catalysed reaction is a ribonucleoside 5'-diphosphate + ATP = a ribonucleoside 5'-triphosphate + ADP. Functionally, major role in the synthesis of nucleoside triphosphates other than ATP. The ATP gamma phosphate is transferred to the NDP beta phosphate via a ping-pong mechanism, using a phosphorylated active-site intermediate. This Photobacterium profundum (strain SS9) protein is Nucleoside diphosphate kinase.